A 4998-amino-acid polypeptide reads, in one-letter code: SCO-spondin (4998 aa).

The signal sequence occupies residues 1-17 (MLPLALLFGMLWTQANG). The EMI domain maps to 18-102 (HWCEQIETVH…ACCPGWGGAH (85 aa)). A VWFD 1 domain is found at 72–241 (GLCAIYKPPE…KLPGSEPGCL (170 aa)). Intrachain disulfides connect cysteine 74-cysteine 202 and cysteine 103-cysteine 240. 2 N-linked (GlcNAc...) asparagine glycosylation sites follow: asparagine 88 and asparagine 130. Positions 349-404 (CPGGQLYSDCVSSCPPSCSAVAQGEEGSCGKECVSGCECPTGLFWDGALCVPAAHC) constitute a TIL 1 domain. Residues 404–496 (CPCYHRRQRY…HGACDTGSCL (93 aa)) form the VWFC 1 domain. The VWFD 2 domain occupies 442–615 (AECAVGGDGH…FQVSGDGRCP (174 aa)). 2 disulfides stabilise this stretch: cysteine 444-cysteine 577 and cysteine 468-cysteine 614. 2 N-linked (GlcNAc...) asparagine glycosylation sites follow: asparagine 534 and asparagine 698. The 54-residue stretch at 706–759 (CPGGQVYQECAPVCGHHCGEPEDCKELGICVAGCNCPPGLLWDLEGQCVPPSMC) folds into the TIL 2 domain. N-linked (GlcNAc...) asparagine glycans are attached at residues asparagine 771, asparagine 790, asparagine 824, and asparagine 866. Positions 892-1062 (GWCQASGAPH…HSWRLNPLCP (171 aa)) constitute a VWFD 3 domain. 3 cysteine pairs are disulfide-bonded: cysteine 894-cysteine 1026, cysteine 916-cysteine 1061, and cysteine 937-cysteine 944. The 57-residue stretch at 1153-1209 (CEGGQVYEPCGSTCPPTCHDHHSELRWHCQVITCVEGCFCPEGTLLHGGACMKLAAC) folds into the TIL 3 domain. A glycan (N-linked (GlcNAc...) asparagine) is linked at asparagine 1230. LDL-receptor class A domains follow at residues 1253-1290 (GCAEGETLCRENGHCVPLEWLCDNQDDCGDGSDEEGCA), 1293-1328 (VCGEGQMSCQSGHCLPLSLICDGQDDCGDGTDEQGC), 1329-1365 (LCPHGSLACADGRCLPPALLCNGHPDCLDAADEESCL), and 1369-1407 (SCISGEVSCVDGTCVRTIQLCDGVWDCPDGADEGPSHCS). Cystine bridges form between cysteine 1254–cysteine 1267, cysteine 1261–cysteine 1280, cysteine 1274–cysteine 1289, cysteine 1294–cysteine 1306, cysteine 1301–cysteine 1319, cysteine 1313–cysteine 1328, cysteine 1330–cysteine 1342, cysteine 1337–cysteine 1355, cysteine 1349–cysteine 1364, cysteine 1370–cysteine 1382, cysteine 1377–cysteine 1395, and cysteine 1389–cysteine 1406. Positions 1406-1440 (CSLPSLPTPPGGIGQNPSTSSLDTAPSPVGSTSPA) are disordered. The segment covering 1420–1440 (QNPSTSSLDTAPSPVGSTSPA) has biased composition (polar residues). LDL-receptor class A domains lie at 1442-1478 (PCSLLEFQCNSGECTPRGWRCDQEEDCTDGSDELDCG) and 1480-1519 (PCMLYQVPCAHSPHCVSPGQLCDGVTQCPDGSDEDPDVCE). Disulfide bonds link cysteine 1443/cysteine 1455, cysteine 1450/cysteine 1468, cysteine 1462/cysteine 1477, cysteine 1481/cysteine 1494, cysteine 1488/cysteine 1507, and cysteine 1501/cysteine 1518. The N-linked (GlcNAc...) asparagine glycan is linked to asparagine 1528. An LDL-receptor class A 7 domain is found at 1533–1571 (PCPEFSCPDGTCIDFLLVCDGNPDCELADETEPSLDEQG). Intrachain disulfides connect cysteine 1534-cysteine 1544, cysteine 1539-cysteine 1557, cysteine 1551-cysteine 1572, cysteine 1584-cysteine 1620, cysteine 1588-cysteine 1625, cysteine 1599-cysteine 1610, cysteine 1640-cysteine 1680, cysteine 1644-cysteine 1685, and cysteine 1654-cysteine 1664. 2 TSP type-1 domains span residues 1572–1626 (CGAW…EACP) and 1628–1686 (DGEW…EGCL). An N-linked (GlcNAc...) asparagine glycan is attached at asparagine 1598. Asparagine 1687 carries an N-linked (GlcNAc...) asparagine glycan. In terms of domain architecture, TIL 4 spans 1692-1746 (GELVFRTCAPCPLTCDDISGQAACPPDRPCSSPGCWCPDGKVLNTEGQCVRPRQC). EGF-like domains follow at residues 1702–1741 (CPLTCDDISGQAACPPDRPCSSPGCWCPDGKVLNTEGQCV) and 1742–1768 (RPRQCPCLVDGAHYWPGQRIKMDCQLC). Residues 1771-1827 (DCGWSSWSPWAECLGPCSSQSLQWSFRSPNNPRLSGHGRQCRGIHRKARRCQTEACE) enclose the TSP type-1 3 domain. Intrachain disulfides connect cysteine 1772–cysteine 1811, cysteine 1783–cysteine 1787, and cysteine 1821–cysteine 1826. The VWFC 2 domain occupies 1827–1887 (EGCEQWGLMY…GMGESCCHCA (61 aa)). Residues asparagine 1892 and asparagine 1989 are each glycosylated (N-linked (GlcNAc...) asparagine). Residues 1929-2085 (CYSPLGLAGL…IFLWVELLGL (157 aa)) enclose the F5/8 type C domain. The LDL-receptor class A 8 domain maps to 2091–2127 (LCPGSRHRCASGECAPKGGPCDGAVDCDDGSDEEGCG). Disulfide bonds link cysteine 2092-cysteine 2104, cysteine 2099-cysteine 2117, and cysteine 2111-cysteine 2126. The interval 2119–2209 (DGSDEEGCGS…TFPPGAKSLH (91 aa)) is disordered. The segment covering 2130 to 2144 (HASTTSRTPALSPTQ) has biased composition (polar residues). The segment covering 2148–2158 (FPREVSEDLRQ) has biased composition (basic and acidic residues). Polar residues-rich tracts occupy residues 2164–2173 (TSHSPPSSGE) and 2190–2201 (QPMQTLSATSTF). LDL-receptor class A domains are found at residues 2242–2278 (PCGPGQVPCDVLGCVEQEQLCDGREDCLDGSDEQHCA) and 2299–2335 (LCSPSQLRCGSGECLPFEHRCDLQVNCQDGSDEDNCV). 12 disulfide bridges follow: cysteine 2243-cysteine 2255, cysteine 2250-cysteine 2268, cysteine 2262-cysteine 2277, cysteine 2300-cysteine 2312, cysteine 2307-cysteine 2325, cysteine 2319-cysteine 2334, cysteine 2337-cysteine 2373, cysteine 2348-cysteine 2352, cysteine 2383-cysteine 2388, cysteine 2403-cysteine 2440, cysteine 2407-cysteine 2445, and cysteine 2418-cysteine 2430. TSP type-1 domains follow at residues 2336–2389 (DCVL…QACP) and 2391–2446 (AGAW…QLCP). The TIL 5 domain maps to 2468-2511 (VPPCPPSCLDPEANRSCSGHCMEGCRCPPGLLLQDSHCLPLSEC). Residues asparagine 2481 and asparagine 2530 are each glycosylated (N-linked (GlcNAc...) asparagine). TSP type-1 domains are found at residues 2551 to 2605 (SCGW…TDCG), 2609 to 2664 (PGWT…PVCP), and 2666 to 2719 (PSAW…HPCT). 9 cysteine pairs are disulfide-bonded: cysteine 2552/cysteine 2590, cysteine 2563/cysteine 2567, cysteine 2600/cysteine 2604, cysteine 2620/cysteine 2658, cysteine 2624/cysteine 2663, cysteine 2640/cysteine 2648, cysteine 2678/cysteine 2713, cysteine 2682/cysteine 2718, and cysteine 2693/cysteine 2703. N-linked (GlcNAc...) asparagine glycans are attached at residues asparagine 2772 and asparagine 2802. TSP type-1 domains follow at residues 2820–2875 (ACGW…RPCR) and 2876–2919 (GPGA…QPCA). Cystine bridges form between cysteine 2821-cysteine 2859, cysteine 2832-cysteine 2836, and cysteine 2869-cysteine 2874. N-linked (GlcNAc...) asparagine glycosylation is found at asparagine 2897, asparagine 2952, asparagine 2999, and asparagine 3009. A TIL 6 domain is found at 2926–2978 (CPEDQQWLDCAQGPASCAHLSIPGEANQTCHPGCYCLSGMLLLNNVCVPVQDC). 2 TSP type-1 domains span residues 3019 to 3086 (QPAW…PGCN) and 3088 to 3143 (AGGW…QPCP). 6 disulfide bridges follow: cysteine 3031–cysteine 3080, cysteine 3035–cysteine 3085, cysteine 3046–cysteine 3070, cysteine 3100–cysteine 3137, cysteine 3104–cysteine 3142, and cysteine 3115–cysteine 3127. N-linked (GlcNAc...) asparagine glycosylation is present at asparagine 3146. The TIL 7 domain maps to 3151–3201 (EGAEYSPCGPPCPRSCDDLVHCVWRCQPGCYCPLGKVLSADGAICVKPSYC). A glycan (N-linked (GlcNAc...) asparagine) is linked at asparagine 3235. 2 consecutive TSP type-1 domains span residues 3244–3306 (SGDW…TACP) and 3308–3363 (DGAW…TLCT). Disulfide bonds link cysteine 3256–cysteine 3299, cysteine 3260–cysteine 3305, cysteine 3271–cysteine 3283, cysteine 3320–cysteine 3355, cysteine 3323–cysteine 3362, and cysteine 3333–cysteine 3345. Residue asparagine 3301 is glycosylated (N-linked (GlcNAc...) asparagine). Residue asparagine 3357 is glycosylated (N-linked (GlcNAc...) asparagine). The TIL 8 domain maps to 3365–3421 (CGGGQDLLPCGQPCPHSCQDLSLGSTCQPGSAGCQSGCGCPPGQLSQDGLCVFPVDC). N-linked (GlcNAc...) asparagine glycans are attached at residues asparagine 3435 and asparagine 3462. The TSP type-1 15 domain maps to 3481–3529 (PGIWSSWGPWEKCSVSCGGGEQLRSRQCARPPCPGLAQQSRICHIHVCR). 3 cysteine pairs are disulfide-bonded: cysteine 3493–cysteine 3523, cysteine 3497–cysteine 3528, and cysteine 3508–cysteine 3513. N-linked (GlcNAc...) asparagine glycosylation is present at asparagine 3638. 4 consecutive TSP type-1 domains span residues 3657-3713 (HGSF…PECP), 3727-3779 (AGGW…PSCA), 3793-3849 (NCFW…RACP), and 3851-3906 (PGGW…MPCE). Intrachain disulfides connect cysteine 3669/cysteine 3707, cysteine 3673/cysteine 3712, and cysteine 3685/cysteine 3697. An N-linked (GlcNAc...) asparagine glycan is attached at asparagine 3761. 6 disulfides stabilise this stretch: cysteine 3794-cysteine 3830, cysteine 3805-cysteine 3809, cysteine 3843-cysteine 3848, cysteine 3863-cysteine 3900, cysteine 3867-cysteine 3905, and cysteine 3878-cysteine 3890. Residues 3909–3964 (CPAGMEMVSCANHCPYSCSDLQEGGMCQEDQACQLGCRCSEGFLEQDGGCVPVGHC) enclose the TIL 9 domain. N-linked (GlcNAc...) asparagine glycosylation occurs at asparagine 3986. TSP type-1 domains are found at residues 4006–4059 (HCAW…VPCP), 4100–4155 (PRGW…QLCL), 4157–4213 (KLER…GPCQ), and 4215–4269 (DCTW…GNCS). Disulfide bonds link cysteine 4007-cysteine 4043, cysteine 4018-cysteine 4022, cysteine 4053-cysteine 4058, cysteine 4112-cysteine 4149, cysteine 4116-cysteine 4154, cysteine 4127-cysteine 4139, cysteine 4169-cysteine 4207, cysteine 4173-cysteine 4212, cysteine 4184-cysteine 4195, cysteine 4216-cysteine 4253, cysteine 4227-cysteine 4229, and cysteine 4263-cysteine 4268. Asparagine 4196 is a glycosylation site (N-linked (GlcNAc...) asparagine). Residue asparagine 4267 is glycosylated (N-linked (GlcNAc...) asparagine). Residues 4273 to 4328 (CPPPFEFQSCGSPCAGLCATHLNHRLCQDLPPCQPGCYCPKGLLEQAGSCILPEQC) form the TIL 10 domain. Residues asparagine 4408 and asparagine 4463 are each glycosylated (N-linked (GlcNAc...) asparagine). In terms of domain architecture, TSP type-1 24 spans 4465-4516 (TCQWGPWGPWSPCQMPCSGGFKLRWRVARDTSAGECPGPWAQTESCNMGSCP). 3 cysteine pairs are disulfide-bonded: cysteine 4466/cysteine 4500, cysteine 4477/cysteine 4481, and cysteine 4510/cysteine 4515. Residues 4530–4576 (DCANQCPRSCADLWDGVQCLQGPCSPGCRCPPGQLVQDGHCVPISSC) form the TIL 11 domain. 3 N-linked (GlcNAc...) asparagine glycosylation sites follow: asparagine 4584, asparagine 4601, and asparagine 4606. The region spanning 4616-4669 (CPVLGPWSAWSECSAVCGKGTMVRHRSCEEHPDREPCQALDLQQWQECNLQACP) is the TSP type-1 25 domain. 3 disulfides stabilise this stretch: cysteine 4628–cysteine 4663, cysteine 4632–cysteine 4668, and cysteine 4643–cysteine 4652. The 55-residue stretch at 4671–4725 (CPPGQVLSTCATMCPSLCSHLWPGTICVREPCQLGCGCPGGQLLYNGTCIPPEAC) folds into the TIL 12 domain. N-linked (GlcNAc...) asparagine glycosylation is found at asparagine 4716, asparagine 4756, asparagine 4799, and asparagine 4806. The TIL 13 domain maps to 4777 to 4835 (CAPGEIWQHGKLGPCEKTCPEMNMTQAWSNCTEAQAPGCVCQLGYFRSQTGLCVPEDHC). Positions 4835–4893 (CECWHHGSPHLPGSEWQEACESCRCLHGKSVCIRHCPELSCAQGEVIMQEPGSCCPICQ) constitute a VWFC 3 domain. 4 disulfides stabilise this stretch: cysteine 4892-cysteine 4952, cysteine 4918-cysteine 4969, cysteine 4928-cysteine 4985, and cysteine 4932-cysteine 4987. Residues 4892-4991 (CQQDTLKEEP…IHSCQCSACQ (100 aa)) form the CTCK domain. Asparagine 4912 carries N-linked (GlcNAc...) asparagine glycosylation.

This sequence belongs to the thrombospondin family. As to expression, subcommissural organ.

It is found in the secreted. It localises to the extracellular space. Its function is as follows. Involved in the modulation of neuronal aggregation. May be involved in developmental events during the formation of the central nervous system. The sequence is that of SCO-spondin from Mus musculus (Mouse).